The chain runs to 214 residues: Pyrrolidone-carboxylate peptidase (214 aa).

Catalysis depends on residues E80, C143, and H166.

Belongs to the peptidase C15 family. Homotetramer.

It localises to the cytoplasm. It catalyses the reaction Release of an N-terminal pyroglutamyl group from a polypeptide, the second amino acid generally not being Pro.. In terms of biological role, removes 5-oxoproline from various penultimate amino acid residues except L-proline. In Klebsiella pneumoniae (strain 342), this protein is Pyrrolidone-carboxylate peptidase.